We begin with the raw amino-acid sequence, 122 residues long: Large ribosomal subunit protein uL14 (122 aa).

It belongs to the universal ribosomal protein uL14 family. Part of the 50S ribosomal subunit. Forms a cluster with proteins L3 and L19. In the 70S ribosome, L14 and L19 interact and together make contacts with the 16S rRNA in bridges B5 and B8.

Functionally, binds to 23S rRNA. Forms part of two intersubunit bridges in the 70S ribosome. This chain is Large ribosomal subunit protein uL14, found in Granulibacter bethesdensis (strain ATCC BAA-1260 / CGDNIH1).